The primary structure comprises 209 residues: GTP-binding nuclear protein Ran1B (209 aa).

The Small GTPase Ran-type domain occupies 1–162; sequence NFKLVIVGDG…LYLARKLAGD (162 aa). 9–16 lines the GTP pocket; sequence DGGTGKTT. The interval 28 to 36 is switch-I; sequence KKYEPTIGV. Residues G59, 113–116, and 141–143 each bind GTP; these read NKVD and SAK. Residues 59–75 form a switch-II region; sequence GQEKFGGLRDGYYIHGQ. A compositionally biased stretch (low complexity) spans 187–200; sequence QHEAELAAAASQPL. The tract at residues 187 to 209 is disordered; it reads QHEAELAAAASQPLPDDDDDAFD.

This sequence belongs to the small GTPase superfamily. Ran family. As to quaternary structure, found in a nuclear export complex with RanGTP, exportin and pre-miRNA.

Its subcellular location is the nucleus. Functionally, GTP-binding protein involved in nucleocytoplasmic transport. Required for the import of protein into the nucleus and also for RNA export. Involved in chromatin condensation and control of cell cycle. This is GTP-binding nuclear protein Ran1B (RAN1B) from Lotus japonicus (Lotus corniculatus var. japonicus).